A 92-amino-acid chain; its full sequence is MASRATSLFIFFFLISCTFMLLETNASKNKSRSDLPLCGFREHCDGLWCPGEGGKYSCINWSCNFIEDCEKRIRCEKTGPCCFDGLCDCTNF.

A signal peptide spans 1–26; sequence MASRATSLFIFFFLISCTFMLLETNA. Intrachain disulfides connect cysteine 63/cysteine 82, cysteine 69/cysteine 87, and cysteine 75/cysteine 89.

The protein belongs to the DEFL family.

It is found in the secreted. The protein is Defensin-like protein 294 of Arabidopsis thaliana (Mouse-ear cress).